The primary structure comprises 349 residues: Nicotinate-nucleotide--dimethylbenzimidazole phosphoribosyltransferase (349 aa).

Glutamate 318 functions as the Proton acceptor in the catalytic mechanism.

Belongs to the CobT family.

It catalyses the reaction 5,6-dimethylbenzimidazole + nicotinate beta-D-ribonucleotide = alpha-ribazole 5'-phosphate + nicotinate + H(+). The protein operates within nucleoside biosynthesis; alpha-ribazole biosynthesis; alpha-ribazole from 5,6-dimethylbenzimidazole: step 1/2. Catalyzes the synthesis of alpha-ribazole-5'-phosphate from nicotinate mononucleotide (NAMN) and 5,6-dimethylbenzimidazole (DMB). The chain is Nicotinate-nucleotide--dimethylbenzimidazole phosphoribosyltransferase from Geobacter sp. (strain M21).